We begin with the raw amino-acid sequence, 295 residues long: Tyrosine recombinase XerC (295 aa).

In terms of domain architecture, Core-binding (CB) spans 1–84 (MTLEEQFLSY…SLKSFYRFLT (84 aa)). Positions 105–289 (KLPEFFYQDE…SMQHLTVEYR (185 aa)) constitute a Tyr recombinase domain. Active-site residues include arginine 145, lysine 169, histidine 241, arginine 244, and histidine 267. Tyrosine 276 serves as the catalytic O-(3'-phospho-DNA)-tyrosine intermediate.

It belongs to the 'phage' integrase family. XerC subfamily. Forms a cyclic heterotetrameric complex composed of two molecules of XerC and two molecules of XerD.

It localises to the cytoplasm. Functionally, site-specific tyrosine recombinase, which acts by catalyzing the cutting and rejoining of the recombining DNA molecules. The XerC-XerD complex is essential to convert dimers of the bacterial chromosome into monomers to permit their segregation at cell division. It also contributes to the segregational stability of plasmids. The sequence is that of Tyrosine recombinase XerC from Lactobacillus delbrueckii subsp. bulgaricus (strain ATCC 11842 / DSM 20081 / BCRC 10696 / JCM 1002 / NBRC 13953 / NCIMB 11778 / NCTC 12712 / WDCM 00102 / Lb 14).